We begin with the raw amino-acid sequence, 525 residues long: Peptide chain release factor 3 (525 aa).

The region spanning Glu-11–Glu-279 is the tr-type G domain. Residues Ser-20–Thr-27, Asp-88–His-92, and Asn-142–Asp-145 contribute to the GTP site.

This sequence belongs to the TRAFAC class translation factor GTPase superfamily. Classic translation factor GTPase family. PrfC subfamily.

The protein localises to the cytoplasm. Functionally, increases the formation of ribosomal termination complexes and stimulates activities of RF-1 and RF-2. It binds guanine nucleotides and has strong preference for UGA stop codons. It may interact directly with the ribosome. The stimulation of RF-1 and RF-2 is significantly reduced by GTP and GDP, but not by GMP. The polypeptide is Peptide chain release factor 3 (Latilactobacillus sakei subsp. sakei (strain 23K) (Lactobacillus sakei subsp. sakei)).